The following is a 115-amino-acid chain: Large ribosomal subunit protein uL22 (115 aa).

This sequence belongs to the universal ribosomal protein uL22 family. In terms of assembly, part of the 50S ribosomal subunit.

Its function is as follows. This protein binds specifically to 23S rRNA; its binding is stimulated by other ribosomal proteins, e.g. L4, L17, and L20. It is important during the early stages of 50S assembly. It makes multiple contacts with different domains of the 23S rRNA in the assembled 50S subunit and ribosome. In terms of biological role, the globular domain of the protein is located near the polypeptide exit tunnel on the outside of the subunit, while an extended beta-hairpin is found that lines the wall of the exit tunnel in the center of the 70S ribosome. The protein is Large ribosomal subunit protein uL22 of Limosilactobacillus reuteri subsp. reuteri (strain JCM 1112) (Lactobacillus reuteri).